The primary structure comprises 199 residues: Nucleoside triphosphate pyrophosphatase (199 aa).

Residue Asp-76 is the Proton acceptor of the active site.

Belongs to the Maf family. It depends on a divalent metal cation as a cofactor.

The protein resides in the cytoplasm. It carries out the reaction a ribonucleoside 5'-triphosphate + H2O = a ribonucleoside 5'-phosphate + diphosphate + H(+). The enzyme catalyses a 2'-deoxyribonucleoside 5'-triphosphate + H2O = a 2'-deoxyribonucleoside 5'-phosphate + diphosphate + H(+). Functionally, nucleoside triphosphate pyrophosphatase. May have a dual role in cell division arrest and in preventing the incorporation of modified nucleotides into cellular nucleic acids. This Roseobacter denitrificans (strain ATCC 33942 / OCh 114) (Erythrobacter sp. (strain OCh 114)) protein is Nucleoside triphosphate pyrophosphatase.